The primary structure comprises 313 residues: Porphobilinogen deaminase (313 aa).

Cys-242 is modified (S-(dipyrrolylmethanemethyl)cysteine).

Belongs to the HMBS family. In terms of assembly, monomer. Dipyrromethane is required as a cofactor.

The catalysed reaction is 4 porphobilinogen + H2O = hydroxymethylbilane + 4 NH4(+). It participates in porphyrin-containing compound metabolism; protoporphyrin-IX biosynthesis; coproporphyrinogen-III from 5-aminolevulinate: step 2/4. Its function is as follows. Tetrapolymerization of the monopyrrole PBG into the hydroxymethylbilane pre-uroporphyrinogen in several discrete steps. This is Porphobilinogen deaminase from Salmonella dublin (strain CT_02021853).